A 99-amino-acid polypeptide reads, in one-letter code: Aspartyl/glutamyl-tRNA(Asn/Gln) amidotransferase subunit C (99 aa).

This sequence belongs to the GatC family. As to quaternary structure, heterotrimer of A, B and C subunits.

The enzyme catalyses L-glutamyl-tRNA(Gln) + L-glutamine + ATP + H2O = L-glutaminyl-tRNA(Gln) + L-glutamate + ADP + phosphate + H(+). It carries out the reaction L-aspartyl-tRNA(Asn) + L-glutamine + ATP + H2O = L-asparaginyl-tRNA(Asn) + L-glutamate + ADP + phosphate + 2 H(+). Allows the formation of correctly charged Asn-tRNA(Asn) or Gln-tRNA(Gln) through the transamidation of misacylated Asp-tRNA(Asn) or Glu-tRNA(Gln) in organisms which lack either or both of asparaginyl-tRNA or glutaminyl-tRNA synthetases. The reaction takes place in the presence of glutamine and ATP through an activated phospho-Asp-tRNA(Asn) or phospho-Glu-tRNA(Gln). The sequence is that of Aspartyl/glutamyl-tRNA(Asn/Gln) amidotransferase subunit C from Rhodococcus erythropolis (strain PR4 / NBRC 100887).